The chain runs to 352 residues: Mitochondrial ubiquitin ligase activator of NFKB 1 (352 aa).

Residues Met1–Ser8 lie on the Cytoplasmic side of the membrane. A helical transmembrane segment spans residues Leu9–Tyr29. Residues Arg30 to Arg238 lie on the Mitochondrial intermembrane side of the membrane. Lys52 is covalently cross-linked (Glycyl lysine isopeptide (Lys-Gly) (interchain with G-Cter in ubiquitin)). Residues Leu239 to Leu259 form a helical membrane-spanning segment. Over Arg260–Ser352 the chain is Cytoplasmic. Lys299 is covalently cross-linked (Glycyl lysine isopeptide (Lys-Gly) (interchain with G-Cter in ubiquitin)). The RING-type zinc finger occupies Cys302 to Arg340.

Homooligomer. Interacts with MAP3K7/TAK1. Interacts with UBC9. Interacts with and sumoylates DNM1L. Interacts with MAVS. Interacts with TP53 (via N-terminus); the interaction leads to ubiquitination and proteasomal degradation of TP53. Ubiquitinated by PRKN during mitophagy, leading to its degradation and enhancement of mitophagy. Deubiquitinated by USP30. In terms of tissue distribution, expressed in cortical neurons (at protein level).

It is found in the mitochondrion outer membrane. The protein localises to the peroxisome. It catalyses the reaction S-ubiquitinyl-[E2 ubiquitin-conjugating enzyme]-L-cysteine + [acceptor protein]-L-lysine = [E2 ubiquitin-conjugating enzyme]-L-cysteine + N(6)-ubiquitinyl-[acceptor protein]-L-lysine.. It functions in the pathway protein modification; protein ubiquitination. The protein operates within protein modification; protein sumoylation. In terms of biological role, exhibits weak E3 ubiquitin-protein ligase activity. E3 ubiquitin ligases accept ubiquitin from an E2 ubiquitin-conjugating enzyme in the form of a thioester and then directly transfer the ubiquitin to targeted substrates. Can ubiquitinate AKT1 preferentially at 'Lys-284' involving 'Lys-48'-linked polyubiquitination and seems to be involved in regulation of Akt signaling by targeting phosphorylated Akt to proteasomal degradation. Mediates polyubiquitination of cytoplasmic TP53 at 'Lys-27' which targets TP53 for proteasomal degradation, thus reducing TP53 levels in the cytoplasm and mitochondrion. Proposed to preferentially act as a SUMO E3 ligase at physiological concentrations. Plays a role in the control of mitochondrial morphology by promoting mitochondrial fragmentation, and influences mitochondrial localization. Likely to promote mitochondrial fission through negatively regulating the mitochondrial fusion proteins MFN1 and MFN2, acting in a pathway that is parallel to the PRKN/PINK1 regulatory pathway. May also be involved in the sumoylation of the membrane fission protein DNM1L. Inhibits cell growth. When overexpressed, activates JNK through MAP3K7/TAK1 and induces caspase-dependent apoptosis. Involved in the modulation of innate immune defense against viruses by inhibiting RIGI-dependent antiviral response. Can mediate RIGI sumoylation and disrupt its polyubiquitination. This chain is Mitochondrial ubiquitin ligase activator of NFKB 1 (Mul1), found in Mus musculus (Mouse).